The primary structure comprises 461 residues: Cysteine--tRNA ligase (461 aa).

Cysteine 30 is a binding site for Zn(2+). Residues 32 to 42 (PTVYSYAHIGN) carry the 'HIGH' region motif. Zn(2+) is bound by residues cysteine 212, histidine 237, and glutamate 241. The 'KMSKS' region motif lies at 270 to 274 (KMSKS). Lysine 273 provides a ligand contact to ATP.

This sequence belongs to the class-I aminoacyl-tRNA synthetase family. As to quaternary structure, monomer. Zn(2+) is required as a cofactor.

It is found in the cytoplasm. The catalysed reaction is tRNA(Cys) + L-cysteine + ATP = L-cysteinyl-tRNA(Cys) + AMP + diphosphate. This is Cysteine--tRNA ligase from Maricaulis maris (strain MCS10) (Caulobacter maris).